A 419-amino-acid polypeptide reads, in one-letter code: UDP-N-acetylglucosamine 1-carboxyvinyltransferase (419 aa).

22–23 is a phosphoenolpyruvate binding site; the sequence is KN. Arg-93 is a binding site for UDP-N-acetyl-alpha-D-glucosamine. The active-site Proton donor is the Cys-117. Cys-117 is subject to 2-(S-cysteinyl)pyruvic acid O-phosphothioketal. Residues 122 to 126, Asp-305, and Ile-327 contribute to the UDP-N-acetyl-alpha-D-glucosamine site; that span reads RPVDQ.

The protein belongs to the EPSP synthase family. MurA subfamily.

The protein resides in the cytoplasm. The catalysed reaction is phosphoenolpyruvate + UDP-N-acetyl-alpha-D-glucosamine = UDP-N-acetyl-3-O-(1-carboxyvinyl)-alpha-D-glucosamine + phosphate. The protein operates within cell wall biogenesis; peptidoglycan biosynthesis. In terms of biological role, cell wall formation. Adds enolpyruvyl to UDP-N-acetylglucosamine. The sequence is that of UDP-N-acetylglucosamine 1-carboxyvinyltransferase from Dichelobacter nodosus (strain VCS1703A).